A 78-amino-acid polypeptide reads, in one-letter code: Probable Fe(2+)-trafficking protein (78 aa).

This sequence belongs to the Fe(2+)-trafficking protein family. Monomer.

In terms of biological role, could be a mediator in iron transactions between iron acquisition and iron-requiring processes, such as synthesis and/or repair of Fe-S clusters in biosynthetic enzymes. The polypeptide is Probable Fe(2+)-trafficking protein (Wigglesworthia glossinidia brevipalpis).